A 217-amino-acid polypeptide reads, in one-letter code: U exon protein (217 aa).

Disordered regions lie at residues 68–110 (SKIF…TNHG) and 170–217 (EKEA…RQGR). The segment covering 202–217 (GGFQQPTGANQARQGR) has biased composition (polar residues).

The protein belongs to the adenoviridae U exon protein family.

The protein resides in the host nucleus. It localises to the host nucleoplasm. The protein localises to the host nucleolus. In terms of biological role, might play a role in viral replication since it is associated with viral replication centers. Seems to have an effect on DBP localization. This is U exon protein from Homo sapiens (Human).